The primary structure comprises 495 residues: Cardiolipin synthase A (495 aa).

The next 2 membrane-spanning stretches (helical) occupy residues 9-29 and 46-66; these read IEVL…WLIT and MAWL…YLLL. PLD phosphodiesterase domains follow at residues 227–254 and 408–435; these read MDLR…IDPK and EGGL…DMRS. Catalysis depends on residues H232, K234, D239, H413, K415, and D420.

It belongs to the phospholipase D family. Cardiolipin synthase subfamily. ClsA sub-subfamily.

The protein resides in the cell membrane. The catalysed reaction is 2 a 1,2-diacyl-sn-glycero-3-phospho-(1'-sn-glycerol) = a cardiolipin + glycerol. Its function is as follows. Catalyzes the reversible phosphatidyl group transfer from one phosphatidylglycerol molecule to another to form cardiolipin (CL) (diphosphatidylglycerol) and glycerol. This Wigglesworthia glossinidia brevipalpis protein is Cardiolipin synthase A.